Here is an 838-residue protein sequence, read N- to C-terminus: Major vault protein (838 aa).

MVP repeat units lie at residues 13–52 (VHIL…VVPP), 53–114 (RFYC…FKLK), 118–170 (VNTG…HIIS), 171–223 (PNTA…ITLT), 224–278 (DTEA…IVLN), 280–328 (KEYC…NVVS), 329–380 (KDQA…IALD), and 381–433 (KNEG…CMSE).

As to quaternary structure, the vault ribonucleoprotein particle is a huge (400 A x 670 A) cage structure of 12.9 MDa. It consists of a dimer of half-vaults, with each half-vault comprising 39 identical major vault protein (MVP) chains, PARP4 and one or more vault RNAs (vRNAs).

It localises to the cytoplasm. It is found in the nucleus. Functionally, required for normal vault structure. Vaults are multi-subunit structures that may act as scaffolds for proteins involved in signal transduction. Vaults may also play a role in nucleo-cytoplasmic transport. This is Major vault protein from Trypanosoma cruzi (strain CL Brener).